The primary structure comprises 692 residues: UvrABC system protein B (692 aa).

The Helicase ATP-binding domain maps to 32 to 187 (ENIENGEKAQ…LLNDLVGIQF (156 aa)). An ATP-binding site is contributed by 45 to 52 (GATGTGKT). The Beta-hairpin motif lies at 98–121 (YYDYYQPEAYVPSSDTYIEKDSSV). A Helicase C-terminal domain is found at 436 to 631 (QIDDLVGEIH…TIKKEIRDLI (196 aa)). One can recognise a UVR domain in the interval 656–691 (KALVKKLEKEMQQAAAALDFEGAAQLRDMVLELRAM).

It belongs to the UvrB family. Forms a heterotetramer with UvrA during the search for lesions. Interacts with UvrC in an incision complex.

It is found in the cytoplasm. Functionally, the UvrABC repair system catalyzes the recognition and processing of DNA lesions. A damage recognition complex composed of 2 UvrA and 2 UvrB subunits scans DNA for abnormalities. Upon binding of the UvrA(2)B(2) complex to a putative damaged site, the DNA wraps around one UvrB monomer. DNA wrap is dependent on ATP binding by UvrB and probably causes local melting of the DNA helix, facilitating insertion of UvrB beta-hairpin between the DNA strands. Then UvrB probes one DNA strand for the presence of a lesion. If a lesion is found the UvrA subunits dissociate and the UvrB-DNA preincision complex is formed. This complex is subsequently bound by UvrC and the second UvrB is released. If no lesion is found, the DNA wraps around the other UvrB subunit that will check the other stand for damage. This Lactococcus lactis subsp. cremoris (strain MG1363) protein is UvrABC system protein B.